Reading from the N-terminus, the 257-residue chain is Nickel import system ATP-binding protein NikD (257 aa).

In terms of domain architecture, ABC transporter spans 4–245; it reads IDIQNLTIKN…HLHPYTERLI (242 aa). Position 37–44 (37–44) interacts with ATP; sequence GESGAGKS.

Belongs to the ABC transporter superfamily. The complex is composed of two ATP-binding proteins (NikD and NikE), two transmembrane proteins (NikB and NikC) and a solute-binding protein (NikA).

The protein localises to the cell membrane. The catalysed reaction is Ni(2+)(out) + ATP + H2O = Ni(2+)(in) + ADP + phosphate + H(+). Its function is as follows. Part of the ABC transporter complex NikABCDE (Opp2) involved in nickel import. Probably responsible for energy coupling to the transport system. This is Nickel import system ATP-binding protein NikD from Staphylococcus aureus (strain MW2).